A 210-amino-acid chain; its full sequence is SAP domain-containing ribonucleoprotein (210 aa).

Ala2 bears the N-acetylalanine mark. Residues 8-42 enclose the SAP domain; that stretch reads LHKLKLAELKQECLARGLETKGIKQDLINRLQAYL. Position 10 is an N6-acetyllysine (Lys10). Over residues 45–64 the composition is skewed to acidic residues; it reads HAEEEANEEDVLGDETEEEE. The tract at residues 45 to 87 is disordered; sequence HAEEEANEEDVLGDETEEEEPKPIELPVKEEEPPEKAVDMASE. The span at 65-87 shows a compositional bias: basic and acidic residues; sequence PKPIELPVKEEEPPEKAVDMASE. N6-acetyllysine is present on Lys142. The interval 162 to 210 is disordered; the sequence is SSISRKSEDDEKLKKRKERFGIVTSSAGTGTTEDTEAKKRKRAERFGIA. Ser163 is subject to Phosphoserine. Over residues 184-193 the composition is skewed to polar residues; sequence VTSSAGTGTT.

Belongs to the SAP domain-containing ribonucleoprotein family. In terms of assembly, interacts with DDX39A. Interacts with FUS. Interacts (via the C-terminal domain) with DDX39B; the interaction is direct and facilitates RNA binding of DDX39B. Component of the transcription/export (TREX) complex at least composed of ALYREF/THOC4, DDX39B, SARNP/CIP29, CHTOP and the THO subcomplex; TREX seems to have dynamic structure involving ATP-dependent remodeling; in the complex interacts directly with DDX39B in a ATP-dependent manner which bridges it to ALYREF/THOC4.

Its subcellular location is the nucleus. It localises to the nucleus speckle. Its function is as follows. Binds both single-stranded and double-stranded DNA with higher affinity for the single-stranded form. Specifically binds to scaffold/matrix attachment region DNA. Also binds single-stranded RNA. Enhances RNA unwinding activity of DDX39A. May participate in important transcriptional or translational control of cell growth, metabolism and carcinogenesis. Component of the TREX complex which is thought to couple mRNA transcription, processing and nuclear export, and specifically associates with spliced mRNA and not with unspliced pre-mRNA. The TREX complex is recruited to spliced mRNAs by a transcription-independent mechanism, binds to mRNA upstream of the exon-junction complex (EJC) and is recruited in a splicing- and cap-dependent manner to a region near the 5' end of the mRNA where it functions in mRNA export to the cytoplasm via the TAP/NXF1 pathway. Associates with DDX39B, which facilitates RNA binding of DDX39B and likely plays a role in mRNA export. The polypeptide is SAP domain-containing ribonucleoprotein (Sarnp) (Mus musculus (Mouse)).